The following is a 648-amino-acid chain: Threonine--tRNA ligase (648 aa).

In terms of domain architecture, TGS spans 1–61 (MIDIILPDGS…INTATVKAIT (61 aa)). The tract at residues 243 to 549 (DHRKLGRELE…LIEHYSGRLP (307 aa)) is catalytic. Residues Cys349, His400, and His526 each coordinate Zn(2+).

Belongs to the class-II aminoacyl-tRNA synthetase family. Homodimer. It depends on Zn(2+) as a cofactor.

Its subcellular location is the cytoplasm. It carries out the reaction tRNA(Thr) + L-threonine + ATP = L-threonyl-tRNA(Thr) + AMP + diphosphate + H(+). Catalyzes the attachment of threonine to tRNA(Thr) in a two-step reaction: L-threonine is first activated by ATP to form Thr-AMP and then transferred to the acceptor end of tRNA(Thr). Also edits incorrectly charged L-seryl-tRNA(Thr). This is Threonine--tRNA ligase from Orientia tsutsugamushi (strain Boryong) (Rickettsia tsutsugamushi).